Here is a 288-residue protein sequence, read N- to C-terminus: Proteasome subunit beta (288 aa).

The propeptide at 1-57 (MTVDGQVGRWPVSAIPAAYMRPGSGSFTEFLAGAEPHLLPGRAGAQPAGAAPAVPHG) is removed in mature form; by autocatalysis. Thr-58 (nucleophile) is an active-site residue.

It belongs to the peptidase T1B family. The 20S proteasome core is composed of 14 alpha and 14 beta subunits that assemble into four stacked heptameric rings, resulting in a barrel-shaped structure. The two inner rings, each composed of seven catalytic beta subunits, are sandwiched by two outer rings, each composed of seven alpha subunits. The catalytic chamber with the active sites is on the inside of the barrel. Has a gated structure, the ends of the cylinder being occluded by the N-termini of the alpha-subunits. Is capped by the proteasome-associated ATPase, ARC.

It is found in the cytoplasm. The catalysed reaction is Cleavage of peptide bonds with very broad specificity.. Its pathway is protein degradation; proteasomal Pup-dependent pathway. Its activity is regulated as follows. The formation of the proteasomal ATPase ARC-20S proteasome complex, likely via the docking of the C-termini of ARC into the intersubunit pockets in the alpha-rings, may trigger opening of the gate for substrate entry. Interconversion between the open-gate and close-gate conformations leads to a dynamic regulation of the 20S proteasome proteolysis activity. In terms of biological role, component of the proteasome core, a large protease complex with broad specificity involved in protein degradation. This chain is Proteasome subunit beta, found in Nakamurella multipartita (strain ATCC 700099 / DSM 44233 / CIP 104796 / JCM 9543 / NBRC 105858 / Y-104) (Microsphaera multipartita).